Consider the following 719-residue polypeptide: Exonuclease mut-7 homolog (719 aa).

The segment at 1–22 (MSKSNNVAPPCRQDQLGFVPAG) is disordered. One can recognise a 3'-5' exonuclease domain in the interval 575–629 (NLANLVRLCLGKKLDKSNQFSNWAQRPLRKEQLRYAALDAFCLLEIYDAIEKQLT). Residues 644–719 (NDVRPPSDSG…FEGPNTKSVL (76 aa)) form a disordered region. The segment covering 667–678 (RRNHRDKYNKRH) has biased composition (basic residues). 2 stretches are compositionally biased toward polar residues: residues 683–692 (DSNSGNSSRA) and 706–719 (EQQT…KSVL).

The protein belongs to the mut-7 family. Mg(2+) is required as a cofactor.

In terms of biological role, possesses 3'-5' exoribonuclease activity. Required for 3'-end trimming of AGO1-bound miRNAs. The sequence is that of Exonuclease mut-7 homolog from Aedes aegypti (Yellowfever mosquito).